Here is a 360-residue protein sequence, read N- to C-terminus: Aminomethyltransferase (360 aa).

It belongs to the GcvT family. As to quaternary structure, the glycine cleavage system is composed of four proteins: P, T, L and H.

The catalysed reaction is N(6)-[(R)-S(8)-aminomethyldihydrolipoyl]-L-lysyl-[protein] + (6S)-5,6,7,8-tetrahydrofolate = N(6)-[(R)-dihydrolipoyl]-L-lysyl-[protein] + (6R)-5,10-methylene-5,6,7,8-tetrahydrofolate + NH4(+). Functionally, the glycine cleavage system catalyzes the degradation of glycine. The sequence is that of Aminomethyltransferase from Legionella pneumophila subsp. pneumophila (strain Philadelphia 1 / ATCC 33152 / DSM 7513).